A 195-amino-acid polypeptide reads, in one-letter code: Imidazole glycerol phosphate synthase subunit HisH 2 (195 aa).

Residues 2 to 195 (KIIIIDTACA…LISNFIKDIG (194 aa)) form the Glutamine amidotransferase type-1 domain. The active-site Nucleophile is Cys77. Residues His175 and Glu177 contribute to the active site.

Heterodimer of HisH and HisF.

The protein resides in the cytoplasm. It carries out the reaction 5-[(5-phospho-1-deoxy-D-ribulos-1-ylimino)methylamino]-1-(5-phospho-beta-D-ribosyl)imidazole-4-carboxamide + L-glutamine = D-erythro-1-(imidazol-4-yl)glycerol 3-phosphate + 5-amino-1-(5-phospho-beta-D-ribosyl)imidazole-4-carboxamide + L-glutamate + H(+). The catalysed reaction is L-glutamine + H2O = L-glutamate + NH4(+). The protein operates within amino-acid biosynthesis; L-histidine biosynthesis; L-histidine from 5-phospho-alpha-D-ribose 1-diphosphate: step 5/9. Functionally, IGPS catalyzes the conversion of PRFAR and glutamine to IGP, AICAR and glutamate. The HisH subunit provides the glutamine amidotransferase activity that produces the ammonia necessary to HisF for the synthesis of IGP and AICAR. The sequence is that of Imidazole glycerol phosphate synthase subunit HisH 2 (hisH2) from Campylobacter jejuni subsp. jejuni serotype O:2 (strain ATCC 700819 / NCTC 11168).